The chain runs to 181 residues: Adenine phosphoribosyltransferase (181 aa).

This sequence belongs to the purine/pyrimidine phosphoribosyltransferase family. Homodimer.

It localises to the cytoplasm. The enzyme catalyses AMP + diphosphate = 5-phospho-alpha-D-ribose 1-diphosphate + adenine. It participates in purine metabolism; AMP biosynthesis via salvage pathway; AMP from adenine: step 1/1. Its function is as follows. Catalyzes a salvage reaction resulting in the formation of AMP, that is energically less costly than de novo synthesis. This Brucella suis (strain ATCC 23445 / NCTC 10510) protein is Adenine phosphoribosyltransferase.